A 494-amino-acid polypeptide reads, in one-letter code: Alpha-amylase-related protein (494 aa).

Positions 1–20 (MFKFALALTLCLAGASLSLA) are cleaved as a signal peptide. Residue glutamine 21 is modified to Pyrrolidone carboxylic acid. A disulfide bridge links cysteine 48 with cysteine 104. Asparagine 118, glutamine 169, and aspartate 178 together coordinate Ca(2+). A disulfide bridge links cysteine 157 with cysteine 171. Residue arginine 206 participates in chloride binding. The Nucleophile role is filled by aspartate 208. Position 212 (histidine 212) interacts with Ca(2+). The Proton donor role is filled by glutamate 245. Asparagine 308 and arginine 343 together coordinate chloride. 3 disulfide bridges follow: cysteine 376-cysteine 382, cysteine 418-cysteine 441, and cysteine 448-cysteine 460.

Belongs to the glycosyl hydrolase 13 family. Monomer. The cofactor is Ca(2+). Chloride serves as cofactor.

The protein localises to the secreted. The catalysed reaction is Endohydrolysis of (1-&gt;4)-alpha-D-glucosidic linkages in polysaccharides containing three or more (1-&gt;4)-alpha-linked D-glucose units.. This is Alpha-amylase-related protein (Amyrel) from Drosophila dossoui (Fruit fly).